A 319-amino-acid chain; its full sequence is Protein-methionine-sulfoxide reductase catalytic subunit MsrP (319 aa).

Positions Met-1–Ala-54 form a signal peptide, tat-type signal. Mo-molybdopterin is bound by residues Asn-75, Tyr-78–Glu-79, Cys-133, Asn-218, Arg-223, and Gly-234–Lys-236.

This sequence belongs to the MsrP family. Heterodimer of a catalytic subunit (MsrP) and a heme-binding subunit (MsrQ). Mo-molybdopterin serves as cofactor. Post-translationally, predicted to be exported by the Tat system. The position of the signal peptide cleavage has not been experimentally proven.

The protein resides in the periplasm. It catalyses the reaction L-methionyl-[protein] + a quinone + H2O = L-methionyl-(S)-S-oxide-[protein] + a quinol. The enzyme catalyses L-methionyl-[protein] + a quinone + H2O = L-methionyl-(R)-S-oxide-[protein] + a quinol. Functionally, part of the MsrPQ system that repairs oxidized periplasmic proteins containing methionine sulfoxide residues (Met-O), using respiratory chain electrons. Thus protects these proteins from oxidative-stress damage caused by reactive species of oxygen and chlorine generated by the host defense mechanisms. MsrPQ is essential for the maintenance of envelope integrity under bleach stress, rescuing a wide series of structurally unrelated periplasmic proteins from methionine oxidation. The catalytic subunit MsrP is non-stereospecific, being able to reduce both (R-) and (S-) diastereoisomers of methionine sulfoxide. The polypeptide is Protein-methionine-sulfoxide reductase catalytic subunit MsrP (Brucella melitensis biotype 1 (strain ATCC 23456 / CCUG 17765 / NCTC 10094 / 16M)).